The primary structure comprises 361 residues: MAGNSIGQHFRVTTFGESHGIALGCIVDGCPPGLEISEADLQTDLDRRRPGTSRYTTQRREPDEVKILSGVFEGKTTGTSIGLLIENTDQRSKDYSDIKDKFRPGHADYTYHQKYGIRDYRGGGRSSARETAMRVAAGAIAKKYLKQAFGVEIRAYLSQMGDVAIDKVDWNEIENNPFFCPDVDKVEAFDQLIRDLKKEGDSIGAKIQVVATNVPVGLGEPVFDRLDADIAHALMSINAVKGVEIGDGFDVVSQKGSQHRDTLSPQGFGSNHAGGILGGISTGQDIVANIALKPTSSITVPGDTINVDGESTQLITKGRHDPCVGIRAVPIAEAMLAIVVMDHLLRHRGQNHGVSTQTPKI.

Residues Arg48 and Arg54 each contribute to the NADP(+) site. FMN contacts are provided by residues Arg125 to Ser127, Asn238 to Ala239, Gly278, Lys293 to Ser297, and Arg319.

It belongs to the chorismate synthase family. Homotetramer. It depends on FMNH2 as a cofactor.

The catalysed reaction is 5-O-(1-carboxyvinyl)-3-phosphoshikimate = chorismate + phosphate. It functions in the pathway metabolic intermediate biosynthesis; chorismate biosynthesis; chorismate from D-erythrose 4-phosphate and phosphoenolpyruvate: step 7/7. Functionally, catalyzes the anti-1,4-elimination of the C-3 phosphate and the C-6 proR hydrogen from 5-enolpyruvylshikimate-3-phosphate (EPSP) to yield chorismate, which is the branch point compound that serves as the starting substrate for the three terminal pathways of aromatic amino acid biosynthesis. This reaction introduces a second double bond into the aromatic ring system. This Vibrio vulnificus (strain CMCP6) protein is Chorismate synthase.